Reading from the N-terminus, the 249-residue chain is Sugar fermentation stimulation protein homolog (249 aa).

The protein belongs to the SfsA family.

This chain is Sugar fermentation stimulation protein homolog, found in Prochlorococcus marinus (strain MIT 9515).